A 111-amino-acid chain; its full sequence is Capsid assembly protein Gp31 (111 aa).

Homoheptamer. Forms a stable complex with groEL in the presence of ATP.

In terms of biological role, essential for proper capsid assembly. In absence of Gp31 the major capsid protein (Gp23) assembles into 'lumps'. Acts as a co-chaperonin with the host groEL protein. This Escherichia coli (Bacteriophage T4) protein is Capsid assembly protein Gp31 (31).